We begin with the raw amino-acid sequence, 92 residues long: Small ribosomal subunit protein uS19c (92 aa).

It belongs to the universal ribosomal protein uS19 family.

It is found in the plastid. The protein resides in the chloroplast. Functionally, protein S19 forms a complex with S13 that binds strongly to the 16S ribosomal RNA. The sequence is that of Small ribosomal subunit protein uS19c from Nicotiana sylvestris (Wood tobacco).